Consider the following 565-residue polypeptide: Formate--tetrahydrofolate ligase (565 aa).

65–72 contacts ATP; the sequence is TPAGEGKT.

It belongs to the formate--tetrahydrofolate ligase family.

The enzyme catalyses (6S)-5,6,7,8-tetrahydrofolate + formate + ATP = (6R)-10-formyltetrahydrofolate + ADP + phosphate. Its pathway is one-carbon metabolism; tetrahydrofolate interconversion. This Syntrophus aciditrophicus (strain SB) protein is Formate--tetrahydrofolate ligase.